Here is a 164-residue protein sequence, read N- to C-terminus: Thiol peroxidase (164 aa).

A Thioredoxin domain is found at 18–163; sequence INEGDFAPDF…FDAALAAYKN (146 aa). Cys-60 acts as the Cysteine sulfenic acid (-SOH) intermediate in catalysis. Cys-60 and Cys-93 are disulfide-bonded.

Belongs to the peroxiredoxin family. Tpx subfamily. In terms of assembly, homodimer.

The enzyme catalyses a hydroperoxide + [thioredoxin]-dithiol = an alcohol + [thioredoxin]-disulfide + H2O. Its function is as follows. Thiol-specific peroxidase that catalyzes the reduction of hydrogen peroxide and organic hydroperoxides to water and alcohols, respectively. Plays a role in cell protection against oxidative stress by detoxifying peroxides. The sequence is that of Thiol peroxidase from Staphylococcus aureus (strain MRSA252).